The chain runs to 118 residues: Ribonuclease P protein component 4 (118 aa).

Zn(2+) is bound by residues Cys-59, Cys-62, Cys-85, and Cys-88.

The protein belongs to the eukaryotic/archaeal RNase P protein component 4 family. Consists of a catalytic RNA component and at least 4-5 protein subunits. Zn(2+) is required as a cofactor.

It is found in the cytoplasm. The catalysed reaction is Endonucleolytic cleavage of RNA, removing 5'-extranucleotides from tRNA precursor.. Part of ribonuclease P, a protein complex that generates mature tRNA molecules by cleaving their 5'-ends. This is Ribonuclease P protein component 4 from Sulfolobus acidocaldarius (strain ATCC 33909 / DSM 639 / JCM 8929 / NBRC 15157 / NCIMB 11770).